The chain runs to 242 residues: NADPH-dependent pterin aldehyde reductase (242 aa).

Thr-2 is subject to N-acetylthreonine. 21-50 (LITGVSKGLGRALALELAKRGHTVIGCARS) is a binding site for NADP(+). Substrate is bound at residue Ser-153. Tyr-166 (proton acceptor) is an active-site residue. Residue Lys-170 participates in NADP(+) binding.

This sequence belongs to the short-chain dehydrogenases/reductases (SDR) family. As to quaternary structure, homodimer. As to expression, mostly expressed in seeds, and, to a lower extent, in roots, leaves, flowers and siliques.

Its subcellular location is the cytoplasm. In terms of biological role, NADPH-dependent pterin aldehyde reductase involved in pterin aldehyde salvage during folate turnover. Catalyzes the reduction of diverse aromatic and aliphatic aldehydes (e.g. acetaldehyde, n-propanal, 1-naphthaldehyde, benzaldehyde, cinnamaldehyde, n-butanal, n-hexanal, n-pentanal, 2-naphthaldehyde, n-octanal, n-nonanal and n-heptanal), in addition to the conversion of pterin-6-aldehyde (PtCHO) to 6-hydroxymethylpterin (PtCH(2)OH), and the conversion of dihydropterin-6-aldehyde (H(2)PtCHO) to 6-hydroxymethyldihydropterin (H(2)PtCH(2)OH). Cannot reduce the pterin ring. The polypeptide is NADPH-dependent pterin aldehyde reductase (Arabidopsis thaliana (Mouse-ear cress)).